Here is a 2157-residue protein sequence, read N- to C-terminus: Polyketide synthase 2 (2157 aa).

The tract at residues 7 to 244 is N-terminal acylcarrier protein transacylase domain (SAT); sequence FIFGDQTGGF…IPIPIWAPYH (238 aa). One can recognise a Ketosynthase family 3 (KS3) domain in the interval 374–807; that stretch reads DAKIAIIGMS…GGNSALLLED (434 aa). Active-site for beta-ketoacyl synthase activity residues include Cys-546, His-681, and His-723. The malonyl-CoA:ACP transacylase (MAT) domain stretch occupies residues 908 to 1213; sequence GFVFSGQGAQ…ASLHRKDDGW (306 aa). Catalysis depends on Ser-998, which acts as the For acyl/malonyl transferase activity. Positions 1290–1605 are product template (PT) domain; the sequence is TSSVQKIIQQ…RSLLNKVLPP (316 aa). The interval 1294-1428 is N-terminal hotdog fold; it reads QKIIQQTDGP…CLLCFADPNS (135 aa). The 307-residue stretch at 1294–1600 folds into the PKS/mFAS DH domain; the sequence is QKIIQQTDGP…FLGMSRSLLN (307 aa). His-1327 serves as the catalytic Proton acceptor; for dehydratase activity. A C-terminal hotdog fold region spans residues 1455–1600; sequence TDSLLSKGIV…FLGMSRSLLN (146 aa). Asp-1514 acts as the Proton donor; for dehydratase activity in catalysis. The tract at residues 1629 to 1653 is disordered; it reads AKDTERRPLDIPTRAQRQPNSPPTG. Positions 1649 to 1726 constitute a Carrier 1 domain; it reads SPPTGTLGRI…ELKEFLGADQ (78 aa). An O-(pantetheine 4'-phosphoryl)serine modification is found at Ser-1686. Residues 1729–1765 are disordered; that stretch reads DDAVACESSNGQHTPQTSDKGSGTLAAQKPDDDTGSD. Polar residues predominate over residues 1735–1749; the sequence is ESSNGQHTPQTSDKG. Positions 1765–1839 constitute a Carrier 2 domain; it reads DTTLHRVCAI…SLQKALCGTE (75 aa). Ser-1799 is modified (O-(pantetheine 4'-phosphoryl)serine). The interval 1875–2151 is thioesterase (TE) domain; it reads ASPPHATSIL…MAEMGDLIGE (277 aa). Ser-1981 acts as the For thioesterase activity in catalysis.

Its function is as follows. Polyketide synthase; part of the Pks2 gene cluster that mediates the formation of infectious structures (appressoria), enabling these fungi to kill insects faster. The product of the Pks2 gene cluster is different from the one of Pks1 and has still not been identified. The protein is Polyketide synthase 2 of Metarhizium guizhouense (strain ARSEF 977).